The sequence spans 338 residues: Clathrin light chain 1 (338 aa).

A disordered region spans residues 1–111 (MATFDDGDFP…NEMREEGFQR (111 aa)). Polar residues-rich tracts occupy residues 29-47 (SEAQ…SSFN) and 61-73 (SSPN…PFES). Positions 102–111 (NEMREEGFQR) are enriched in basic and acidic residues. Residues 102 to 163 (NEMREEGFQR…TIETNKTDNR (62 aa)) are involved in binding clathrin heavy chain. The stretch at 122 to 142 (LEEKEKKEKEMRNQIITEAED) forms a coiled coil. Positions 192-338 (IPREVPNIEK…VTEAEGTKAE (147 aa)) are disordered. Residues 197-212 (PNIEKKRGKKDPDKKP) are compositionally biased toward basic and acidic residues. The span at 241–253 (NPPPHMMPPPPPA) shows a compositional bias: pro residues. The segment covering 254–304 (KDAKDGKDAKDGKDAKTGKDGKDAKGGKDAKDLKDGKPADPKVTEEKRPSP) has biased composition (basic and acidic residues).

It belongs to the clathrin light chain family. As to quaternary structure, clathrin coats are formed from molecules containing 3 heavy chains and 3 light chains.

The protein resides in the cytoplasmic vesicle membrane. The protein localises to the membrane. It localises to the coated pit. Its function is as follows. Clathrin is the major protein of the polyhedral coat of coated pits and vesicles. The protein is Clathrin light chain 1 of Arabidopsis thaliana (Mouse-ear cress).